The chain runs to 474 residues: tRNA-2-methylthio-N(6)-dimethylallyladenosine synthase (474 aa).

Residues 3 to 120 (KKLHIKTWGC…LPEMINSVRG (118 aa)) enclose the MTTase N-terminal domain. 6 residues coordinate [4Fe-4S] cluster: Cys12, Cys49, Cys83, Cys157, Cys161, and Cys164. The region spanning 143–375 (RAEGPTAFVS…QERINQQAMA (233 aa)) is the Radical SAM core domain. Positions 378-441 (RRMLGTTQRI…PNSLRGKVVR (64 aa)) constitute a TRAM domain.

Belongs to the methylthiotransferase family. MiaB subfamily. Monomer. The cofactor is [4Fe-4S] cluster.

Its subcellular location is the cytoplasm. It carries out the reaction N(6)-dimethylallyladenosine(37) in tRNA + (sulfur carrier)-SH + AH2 + 2 S-adenosyl-L-methionine = 2-methylsulfanyl-N(6)-dimethylallyladenosine(37) in tRNA + (sulfur carrier)-H + 5'-deoxyadenosine + L-methionine + A + S-adenosyl-L-homocysteine + 2 H(+). Its function is as follows. Catalyzes the methylthiolation of N6-(dimethylallyl)adenosine (i(6)A), leading to the formation of 2-methylthio-N6-(dimethylallyl)adenosine (ms(2)i(6)A) at position 37 in tRNAs that read codons beginning with uridine. This Escherichia coli (strain UTI89 / UPEC) protein is tRNA-2-methylthio-N(6)-dimethylallyladenosine synthase.